We begin with the raw amino-acid sequence, 265 residues long: Short chain dehydrogenase mdpC (265 aa).

3 residues coordinate NADP(+): Ile-25, Asn-98, and Arg-131. Active-site proton donor residues include Ser-147 and Ser-148. Residues Tyr-162, Lys-166, and Thr-197 each coordinate NADP(+). Tyr-162 (proton acceptor) is an active-site residue. Lys-166 acts as the Lowers pKa of active site Tyr in catalysis.

This sequence belongs to the short-chain dehydrogenases/reductases (SDR) family.

It catalyses the reaction 3,8,9,10-tetrahydroxy-6-methyl-1,4-dihydroanthracen-1-one + NADPH + H(+) = (3R)-3,8,9,10-tetrahydroxy-6-methyl-1,2,3,4-tetrahydroanthracen-1-one + NADP(+). The protein operates within secondary metabolite biosynthesis. Short chain dehydrogenase; part of the gene cluster that mediates the biosynthesis of monodictyphenone, a prenyl xanthone derivative. The pathway begins with the synthesis of atrochrysone thioester by the polyketide synthase (PKS) mdpG. The atrochrysone carboxyl ACP thioesterase mdpF then breaks the thioester bond and releases the atrochrysone carboxylic acid from mdpG. The atrochrysone carboxylic acid is then converted to atrochrysone which is further transformed into emodin anthrone. The next step is performed by the anthrone oxygenase mdpH that catalyzes the oxidation of emodinanthrone to emodin. Emodin is further modified to yield monodictyphenone via several steps involving mdpB, mdpC mdpJ, mdpK and mdpL. The short chain dehydrogenase mdpC converts the tautomers of emodin hydroquinone into the 3-hydroxy-3,4-dihydroan-thracen-1(2H)-one derivative. These enzymes with xptA, xptB and xptC are also proposed to be involved in the synthesis of shamixanthone from emodin. Especially, direct reduction of emodin by the short chain dehydrogenase mdpC followed by dehydration catalyzed by the scytalone dehydratase-like protein mdpB gives loss of oxygen and formation of chrysophanol intermediate in two simple steps. In Emericella nidulans (strain FGSC A4 / ATCC 38163 / CBS 112.46 / NRRL 194 / M139) (Aspergillus nidulans), this protein is Short chain dehydrogenase mdpC.